A 91-amino-acid polypeptide reads, in one-letter code: Small ribosomal subunit protein uS19 (91 aa).

This sequence belongs to the universal ribosomal protein uS19 family.

Its function is as follows. Protein S19 forms a complex with S13 that binds strongly to the 16S ribosomal RNA. The polypeptide is Small ribosomal subunit protein uS19 (Aromatoleum aromaticum (strain DSM 19018 / LMG 30748 / EbN1) (Azoarcus sp. (strain EbN1))).